The following is a 250-amino-acid chain: UPF0758 protein RPB_0700 (250 aa).

Positions 1 to 27 are disordered; that stretch reads MVDPISNAAPPMPADSSERLDPPGFAE. The region spanning 128–250 is the MPN domain; sequence VLSSWSAVID…HASLKGLKLF (123 aa). Zn(2+) is bound by residues His-199, His-201, and Asp-212. Positions 199 to 212 match the JAMM motif motif; the sequence is HNHPSGDPTPSQAD.

This sequence belongs to the UPF0758 family.

The sequence is that of UPF0758 protein RPB_0700 from Rhodopseudomonas palustris (strain HaA2).